A 138-amino-acid chain; its full sequence is MAKSKMLDLRNLSVDELIKTNESKRAELFALKFQAAVGSLEQTHRIKEIKKEIARIELALSEKRLSGENTNKVIKADYNKAVEEAEKAGKEVRAKQRKFLEEQYGQQSQTKVNEADIQKAMQAAEQETVEPDTKGETK.

Residues Met1 to Asn79 form a large ribosomal subunit protein uL29 region. The segment at Lys80–Lys138 is unknown. The tract at residues Gln103–Lys138 is disordered.

It belongs to the universal ribosomal protein uL29 family.

The protein is Large ribosomal subunit protein uL29 of Mycoplasma capricolum subsp. capricolum (strain California kid / ATCC 27343 / NCTC 10154).